The following is a 238-amino-acid chain: Opacity protein opA68 (238 aa).

Ala1 is a signal peptide. The tract at residues 88–109 (NLQRRTSNGNRRDRKTENQENG) is disordered.

The protein belongs to the opacity porin family.

The protein resides in the cell outer membrane. Implicated in a number of adherence functions. OPA proteins are implicated in pathogenesis and are subject to phase variation. This is Opacity protein opA68 from Neisseria gonorrhoeae.